A 194-amino-acid chain; its full sequence is Peptidyl-tRNA hydrolase (194 aa).

A tRNA-binding site is contributed by Tyr16. His21 (proton acceptor) is an active-site residue. TRNA contacts are provided by Phe67, Asn69, and Asn115.

Belongs to the PTH family. In terms of assembly, monomer.

It is found in the cytoplasm. The enzyme catalyses an N-acyl-L-alpha-aminoacyl-tRNA + H2O = an N-acyl-L-amino acid + a tRNA + H(+). Functionally, hydrolyzes ribosome-free peptidyl-tRNAs (with 1 or more amino acids incorporated), which drop off the ribosome during protein synthesis, or as a result of ribosome stalling. Its function is as follows. Catalyzes the release of premature peptidyl moieties from peptidyl-tRNA molecules trapped in stalled 50S ribosomal subunits, and thus maintains levels of free tRNAs and 50S ribosomes. The protein is Peptidyl-tRNA hydrolase of Shigella flexneri.